Consider the following 207-residue polypeptide: Thiamine-phosphate synthase (207 aa).

4-amino-2-methyl-5-(diphosphooxymethyl)pyrimidine is bound by residues 35–39 and N67; that span reads QYRDK. Residues D68 and D86 each coordinate Mg(2+). 4-amino-2-methyl-5-(diphosphooxymethyl)pyrimidine is bound at residue T105. 132–134 provides a ligand contact to 2-[(2R,5Z)-2-carboxy-4-methylthiazol-5(2H)-ylidene]ethyl phosphate; it reads SVT. K135 is a 4-amino-2-methyl-5-(diphosphooxymethyl)pyrimidine binding site. A 2-[(2R,5Z)-2-carboxy-4-methylthiazol-5(2H)-ylidene]ethyl phosphate-binding site is contributed by G162.

The protein belongs to the thiamine-phosphate synthase family. It depends on Mg(2+) as a cofactor.

It catalyses the reaction 2-[(2R,5Z)-2-carboxy-4-methylthiazol-5(2H)-ylidene]ethyl phosphate + 4-amino-2-methyl-5-(diphosphooxymethyl)pyrimidine + 2 H(+) = thiamine phosphate + CO2 + diphosphate. The enzyme catalyses 2-(2-carboxy-4-methylthiazol-5-yl)ethyl phosphate + 4-amino-2-methyl-5-(diphosphooxymethyl)pyrimidine + 2 H(+) = thiamine phosphate + CO2 + diphosphate. The catalysed reaction is 4-methyl-5-(2-phosphooxyethyl)-thiazole + 4-amino-2-methyl-5-(diphosphooxymethyl)pyrimidine + H(+) = thiamine phosphate + diphosphate. Its pathway is cofactor biosynthesis; thiamine diphosphate biosynthesis; thiamine phosphate from 4-amino-2-methyl-5-diphosphomethylpyrimidine and 4-methyl-5-(2-phosphoethyl)-thiazole: step 1/1. In terms of biological role, condenses 4-methyl-5-(beta-hydroxyethyl)thiazole monophosphate (THZ-P) and 2-methyl-4-amino-5-hydroxymethyl pyrimidine pyrophosphate (HMP-PP) to form thiamine monophosphate (TMP). The polypeptide is Thiamine-phosphate synthase (Pseudomonas putida (strain ATCC 700007 / DSM 6899 / JCM 31910 / BCRC 17059 / LMG 24140 / F1)).